The sequence spans 382 residues: Histidinol-phosphate aminotransferase (382 aa).

Lys215 is subject to N6-(pyridoxal phosphate)lysine. Residues 363–382 (NIDNQSKTHSQTSSIRKGTI) are disordered.

Belongs to the class-II pyridoxal-phosphate-dependent aminotransferase family. Histidinol-phosphate aminotransferase subfamily. As to quaternary structure, homodimer. It depends on pyridoxal 5'-phosphate as a cofactor.

It carries out the reaction L-histidinol phosphate + 2-oxoglutarate = 3-(imidazol-4-yl)-2-oxopropyl phosphate + L-glutamate. Its pathway is amino-acid biosynthesis; L-histidine biosynthesis; L-histidine from 5-phospho-alpha-D-ribose 1-diphosphate: step 7/9. This chain is Histidinol-phosphate aminotransferase, found in Yersinia pseudotuberculosis serotype O:1b (strain IP 31758).